The primary structure comprises 219 residues: Protein-L-isoaspartate O-methyltransferase 2 (219 aa).

Residue S67 is part of the active site.

The protein belongs to the methyltransferase superfamily. L-isoaspartyl/D-aspartyl protein methyltransferase family.

The protein localises to the cytoplasm. It carries out the reaction [protein]-L-isoaspartate + S-adenosyl-L-methionine = [protein]-L-isoaspartate alpha-methyl ester + S-adenosyl-L-homocysteine. Catalyzes the methyl esterification of L-isoaspartyl residues in peptides and proteins that result from spontaneous decomposition of normal L-aspartyl and L-asparaginyl residues. It plays a role in the repair and/or degradation of damaged proteins. This is Protein-L-isoaspartate O-methyltransferase 2 from Nitrosococcus oceani (strain ATCC 19707 / BCRC 17464 / JCM 30415 / NCIMB 11848 / C-107).